A 229-amino-acid chain; its full sequence is Potassium/proton antiporter CemA (229 aa).

A run of 4 helical transmembrane segments spans residues 7–27, 114–134, 154–174, and 189–209; these read FTPLLYLASIVFLPWWISLSF, LICFVILSGYSILGNEELLIL, ILLLTDLCIGFHSPHGWELMI, and IISGLVSTFPVILDTIFKYWI.

It belongs to the CemA family.

It is found in the plastid. The protein localises to the chloroplast inner membrane. It carries out the reaction K(+)(in) + H(+)(out) = K(+)(out) + H(+)(in). Its function is as follows. Contributes to K(+)/H(+) antiport activity by supporting proton efflux to control proton extrusion and homeostasis in chloroplasts in a light-dependent manner to modulate photosynthesis. Prevents excessive induction of non-photochemical quenching (NPQ) under continuous-light conditions. Indirectly promotes efficient inorganic carbon uptake into chloroplasts. This Gossypium hirsutum (Upland cotton) protein is Potassium/proton antiporter CemA.